The sequence spans 212 residues: Translation initiation factor IF-3 (212 aa).

The segment at 171 to 212 is disordered; the sequence is PKSASKKGHTPPKTQVEASKQANESAETEEEKKRCHPTKPVL. Positions 182–195 are enriched in polar residues; the sequence is PKTQVEASKQANES.

The protein belongs to the IF-3 family. As to quaternary structure, monomer.

The protein localises to the cytoplasm. Functionally, IF-3 binds to the 30S ribosomal subunit and shifts the equilibrium between 70S ribosomes and their 50S and 30S subunits in favor of the free subunits, thus enhancing the availability of 30S subunits on which protein synthesis initiation begins. In Porphyromonas gingivalis (strain ATCC 33277 / DSM 20709 / CIP 103683 / JCM 12257 / NCTC 11834 / 2561), this protein is Translation initiation factor IF-3.